Reading from the N-terminus, the 671-residue chain is DNA ligase (671 aa).

NAD(+) contacts are provided by residues 32 to 36, 81 to 82, and Glu-113; these read DAEYD and SL. Residue Lys-115 is the N6-AMP-lysine intermediate of the active site. Arg-136, Glu-173, Lys-290, and Lys-314 together coordinate NAD(+). 4 residues coordinate Zn(2+): Cys-408, Cys-411, Cys-426, and Cys-432. One can recognise a BRCT domain in the interval 593-671; that stretch reads EIDSPFAGKT…EAEMLRLLGV (79 aa).

Belongs to the NAD-dependent DNA ligase family. LigA subfamily. Mg(2+) serves as cofactor. Mn(2+) is required as a cofactor.

It carries out the reaction NAD(+) + (deoxyribonucleotide)n-3'-hydroxyl + 5'-phospho-(deoxyribonucleotide)m = (deoxyribonucleotide)n+m + AMP + beta-nicotinamide D-nucleotide.. In terms of biological role, DNA ligase that catalyzes the formation of phosphodiester linkages between 5'-phosphoryl and 3'-hydroxyl groups in double-stranded DNA using NAD as a coenzyme and as the energy source for the reaction. It is essential for DNA replication and repair of damaged DNA. The protein is DNA ligase of Salmonella arizonae (strain ATCC BAA-731 / CDC346-86 / RSK2980).